Consider the following 578-residue polypeptide: Phosphoenolpyruvate-protein phosphotransferase (578 aa).

The active-site Tele-phosphohistidine intermediate is histidine 195. The phosphoenolpyruvate site is built by arginine 302 and arginine 338. 2 residues coordinate Mg(2+): glutamate 437 and aspartate 461. Phosphoenolpyruvate contacts are provided by residues 460–461 (ND) and arginine 471. Cysteine 508 acts as the Proton donor in catalysis.

It belongs to the PEP-utilizing enzyme family. In terms of assembly, homodimer. The cofactor is Mg(2+).

The protein resides in the cytoplasm. The catalysed reaction is L-histidyl-[protein] + phosphoenolpyruvate = N(pros)-phospho-L-histidyl-[protein] + pyruvate. In terms of biological role, general (non sugar-specific) component of the phosphoenolpyruvate-dependent sugar phosphotransferase system (sugar PTS). This major carbohydrate active-transport system catalyzes the phosphorylation of incoming sugar substrates concomitantly with their translocation across the cell membrane. Enzyme I transfers the phosphoryl group from phosphoenolpyruvate (PEP) to the phosphoryl carrier protein (HPr). The protein is Phosphoenolpyruvate-protein phosphotransferase (ptsI) of Geobacillus stearothermophilus (Bacillus stearothermophilus).